The following is a 249-amino-acid chain: MTERDTTHFGYKQVPVTEKESHVAKVFDSVAAKYDLMNDLMSMGIHRLWKRFTIDKSGVRAGASVLDIAGGTGDLTKKFSRLVGPSGKVVLADINASMLQVGRNQLLDHGYGDNIEFVQANAEALPFPDNSFDCVSIAFGLRNVTDKDQALREMQRVLRPGGRLLVLEFSKPTNPIVSKAYDVYSFSALPLMGSLVAQDSESYRYLAESIRMHPDQETLKSMMEQAGLCLCKYYNLTSGVVALHTGVKA.

Residues Thr-72, Asp-93, and 121–122 each bind S-adenosyl-L-methionine; that span reads NA.

It belongs to the class I-like SAM-binding methyltransferase superfamily. MenG/UbiE family.

It catalyses the reaction a 2-demethylmenaquinol + S-adenosyl-L-methionine = a menaquinol + S-adenosyl-L-homocysteine + H(+). It carries out the reaction a 2-methoxy-6-(all-trans-polyprenyl)benzene-1,4-diol + S-adenosyl-L-methionine = a 5-methoxy-2-methyl-3-(all-trans-polyprenyl)benzene-1,4-diol + S-adenosyl-L-homocysteine + H(+). It participates in quinol/quinone metabolism; menaquinone biosynthesis; menaquinol from 1,4-dihydroxy-2-naphthoate: step 2/2. It functions in the pathway cofactor biosynthesis; ubiquinone biosynthesis. Methyltransferase required for the conversion of demethylmenaquinol (DMKH2) to menaquinol (MKH2) and the conversion of 2-polyprenyl-6-methoxy-1,4-benzoquinol (DDMQH2) to 2-polyprenyl-3-methyl-6-methoxy-1,4-benzoquinol (DMQH2). In Hahella chejuensis (strain KCTC 2396), this protein is Ubiquinone/menaquinone biosynthesis C-methyltransferase UbiE.